Reading from the N-terminus, the 431-residue chain is Inactive polypeptide N-acetylgalactosaminyltransferase-like protein 5 (431 aa).

Over 1-4 (MKSV) the chain is Cytoplasmic. The chain crosses the membrane as a helical; Signal-anchor for type II membrane protein span at residues 5-27 (IIQGLFCGFLAIGLWASMLLLFL). The Lumenal segment spans residues 28 to 431 (HLEQEDMLEN…TERKRKKNRF (404 aa)). N-linked (GlcNAc...) asparagine glycosylation occurs at N68. Cystine bridges form between C105/C336 and C327/C403. A catalytic subdomain A region spans residues 114–224 (LPTASIIICF…RVWLEPLLHA (111 aa)). Residues 282–344 (PIRSPAMTGG…PCSRVGYNSK (63 aa)) are catalytic subdomain B. N-linked (GlcNAc...) asparagine glycosylation is found at N353 and N390.

The protein belongs to the glycosyltransferase 2 family. GalNAc-T subfamily. Requires Mn(2+) as cofactor. In terms of tissue distribution, expressed in testis. Mainly expressed in the round and elongated spermatids during spermiogenesis, not in the outermost cells of the seminiferous tubules, which contain spermatogonia and somatic Sertoli cells. Present in the juxtanuclear space in the round spermatids, not in the acrosomal vesicles. In the elongating spermatids, localizes strongly in the acroplaxome, the region between the developing acrosome and nucleus. During differentiation, also weakly detected in the transient manchette containing microtubules. In epididymal spermatozoa, weakly detected in the midpiece, but concentrates mainly in the neck region around the head-tail coupling apparatus (at protein level).

It is found in the late endosome membrane. Its function is as follows. Probable inactive glycosyltransferase required during spermatid development. May participate in protein loading into the acrosomes and accumulation of ubiquitin-proteasome systems around the head-tail coupling apparatus region. The sequence is that of Inactive polypeptide N-acetylgalactosaminyltransferase-like protein 5 (Galntl5) from Mus musculus (Mouse).